Here is a 615-residue protein sequence, read N- to C-terminus: MASQTGQKIRLVRCPKCLKILQEDEDVPVYQCGGCSAILQAKRRNIAPSSTPSAGETERAQANEPQSVPETNNVSSSSGQDTVLPSSPGRSVDQEYEKGRNASMESTEKELDDLELSNGDGTNEIQEQECSLGDSEKNEREDNSRLESHMMNTVAEAAGSGSSSGSLSVDHVVAARASNPSGNSEISPDASPVEEKQSQLDILANKTPSAYDVVAARASNSSGNAEISPDASPVEEKQSQLDYPANKTSSAYDGSESSSDEREGQLLDDDEQWNALQKIRSGKFEMHRYPGYKEQGASSSSPFSENRRNGITTYNERHQNRSLQLEGPGGRLGRQGRRHVTEQLRPDMPFYPRESYTRGSPSHPSHDEFDRYPRAHSLQMPSYAGGMNHDFVDYMYHNNPRARGQGQGSRISGEMGRNHGGWYSGQLHNSYSSYSASPQRPMEQPEYHPRWRREIVSDVEDHQRNRHAGHHHELQTRRLRERQRVAKRHVRPTAGGAPFVSCYSCSENLQLPVDFLIFKRKHHLLRCGTCTTVLRFSLQSRNHLVPAVTHDINANRNSNSTSESPIDKAPSKPEKLRSSVQDEELPVARGSPLHRLMGYSTVSQVFKVSQRPPSI.

Disordered stretches follow at residues 46-271 (IAPS…DDDE), 292-336 (YKEQ…GRQG), and 549-592 (THDI…RGSP). Polar residues-rich tracts occupy residues 63–89 (NEPQSVPETNNVSSSSGQDTVLPSSPG) and 119–129 (GDGTNEIQEQE). Residues 104-129 (MESTEKELDDLELSNGDGTNEIQEQE) are a coiled coil. A compositionally biased stretch (basic and acidic residues) spans 134–148 (DSEKNEREDNSRLES). Over residues 159-168 (GSGSSSGSLS) the composition is skewed to low complexity. 2 stretches are compositionally biased toward polar residues: residues 296-314 (GASSSSPFSENRRNGITTY) and 552-564 (INANRNSNSTSES). Residues 565 to 577 (PIDKAPSKPEKLR) are compositionally biased toward basic and acidic residues.

As to quaternary structure, interacts with RLK902. Binds and recruits EDR1 at the powdery mildew (e.g. G.cichoracearum) penetration site on the plasma membrane. Interacts with CHC2. As to expression, expressed in stems and rosette leaves, and weakly in inflorescences. Not detected in roots.

The protein resides in the cell membrane. It localises to the endosome. In terms of biological role, plays a negative role in salicylic acid (SA)-mediated resistance to powdery mildew (e.g. Golovinomyces cichoracearum). May modulate plant immunity by regulating the relocation of EDR1 by interacting with CHC2 and modulating endocytosis. The protein is Protein ENHANCED DISEASE RESISTANCE 4 of Arabidopsis thaliana (Mouse-ear cress).